A 173-amino-acid chain; its full sequence is CASP-like protein 3A1 (173 aa).

Residue Met1 is a topological domain, cytoplasmic. Residues 2–22 traverse the membrane as a helical segment; the sequence is VDIALRSAVVAFMVVSLSAMF. The Extracellular portion of the chain corresponds to 23–48; it reads TSTQHSEVHIIGFSIPVSLRWNRSQP. N-linked (GlcNAc...) asparagine glycosylation occurs at Asn44. Residues 49–69 form a helical membrane-spanning segment; that stretch reads FEFLVVVELLICAYAFVQFVY. The Cytoplasmic segment spans residues 70-84; that stretch reads QSVVLAKNAVPTRRC. Residues 85 to 105 traverse the membrane as a helical segment; the sequence is IWVQLAADQVCAYLVLAAAAA. Residues 106-140 are Extracellular-facing; sequence AAGASRTNKSGFQSLGMQNIKVPGVCIVLDKFCNR. Asn113 carries an N-linked (GlcNAc...) asparagine glycan. Residues 141–161 form a helical membrane-spanning segment; that stretch reads ATIAIIFTLLAAGASGISVTL. Residues 162 to 173 lie on the Cytoplasmic side of the membrane; the sequence is DVYMLTLTYYMG.

This sequence belongs to the Casparian strip membrane proteins (CASP) family. Homodimer and heterodimers.

The protein localises to the cell membrane. The chain is CASP-like protein 3A1 from Pteridium aquilinum subsp. aquilinum (Bracken fern).